Consider the following 414-residue polypeptide: MTQANLSETLFKPRFKHPETSTLVRRFNHGAQPPVQSALDGKTIPHWYRMINRLMWIWRGIDPREILDVQARIVMSDAERTDDDLYDTVIGYRGGNWIYEWATQAMVWQQKACAEEDPQLSGRHWLHAATLYNIAAYPHLKGDDLAEQAQALSNRAYEEAAQRLPGTMRQMEFTVPGGAPITGFLHMPKGDGPFPTVLMCGGLDAMQTDYYSLYERYFAPRGIVMLTIDMPSVGFSSKWKLTQDSSLLHQHVLKALPNVPWVDHTRVAAFGFRFGANVAVRLAYLESPRLKAVACLGPVVHTLLSDFKCQQQVPEMYLDVLASRLGMHDASDEALRVELNRYSLKVQGLLGRRCPTPMLSGYWKNDPFSPEEDSRLITSSSADGKLLEIPFYPVYRNFDKGLQEITGWIEKRLC.

The protein belongs to the FrsA family.

It carries out the reaction a carboxylic ester + H2O = an alcohol + a carboxylate + H(+). Catalyzes the hydrolysis of esters. The protein is Esterase FrsA of Shigella boydii serotype 18 (strain CDC 3083-94 / BS512).